A 466-amino-acid chain; its full sequence is UDP-N-acetylmuramate--L-alanine ligase (466 aa).

114–120 (GTHGKTT) serves as a coordination point for ATP.

Belongs to the MurCDEF family.

The protein localises to the cytoplasm. It carries out the reaction UDP-N-acetyl-alpha-D-muramate + L-alanine + ATP = UDP-N-acetyl-alpha-D-muramoyl-L-alanine + ADP + phosphate + H(+). It participates in cell wall biogenesis; peptidoglycan biosynthesis. Its function is as follows. Cell wall formation. The chain is UDP-N-acetylmuramate--L-alanine ligase from Chlorobium phaeobacteroides (strain DSM 266 / SMG 266 / 2430).